Here is a 220-residue protein sequence, read N- to C-terminus: Phosphoribosylformylglycinamidine synthase subunit PurQ (220 aa).

Residues 2–220 (RVGVVVFPGS…LRSVLAGAKV (219 aa)) enclose the Glutamine amidotransferase type-1 domain. Cysteine 85 acts as the Nucleophile in catalysis. Active-site residues include histidine 193 and glutamate 195.

In terms of assembly, part of the FGAM synthase complex composed of 1 PurL, 1 PurQ and 2 PurS subunits.

Its subcellular location is the cytoplasm. The catalysed reaction is N(2)-formyl-N(1)-(5-phospho-beta-D-ribosyl)glycinamide + L-glutamine + ATP + H2O = 2-formamido-N(1)-(5-O-phospho-beta-D-ribosyl)acetamidine + L-glutamate + ADP + phosphate + H(+). It carries out the reaction L-glutamine + H2O = L-glutamate + NH4(+). Its pathway is purine metabolism; IMP biosynthesis via de novo pathway; 5-amino-1-(5-phospho-D-ribosyl)imidazole from N(2)-formyl-N(1)-(5-phospho-D-ribosyl)glycinamide: step 1/2. Functionally, part of the phosphoribosylformylglycinamidine synthase complex involved in the purines biosynthetic pathway. Catalyzes the ATP-dependent conversion of formylglycinamide ribonucleotide (FGAR) and glutamine to yield formylglycinamidine ribonucleotide (FGAM) and glutamate. The FGAM synthase complex is composed of three subunits. PurQ produces an ammonia molecule by converting glutamine to glutamate. PurL transfers the ammonia molecule to FGAR to form FGAM in an ATP-dependent manner. PurS interacts with PurQ and PurL and is thought to assist in the transfer of the ammonia molecule from PurQ to PurL. The sequence is that of Phosphoribosylformylglycinamidine synthase subunit PurQ from Rubrobacter xylanophilus (strain DSM 9941 / JCM 11954 / NBRC 16129 / PRD-1).